The chain runs to 287 residues: Protease HtpX (287 aa).

Transmembrane regions (helical) follow at residues 4–24 and 33–53; these read IFLL…VMSI and GGLL…SLAI. Histidine 139 contacts Zn(2+). The active site involves glutamate 140. Histidine 143 lines the Zn(2+) pocket. Transmembrane regions (helical) follow at residues 154 to 174 and 195 to 215; these read LIQG…AGII and AVVF…VAYF. Glutamate 220 is a binding site for Zn(2+).

Belongs to the peptidase M48B family. The cofactor is Zn(2+).

It localises to the cell inner membrane. The chain is Protease HtpX from Shewanella pealeana (strain ATCC 700345 / ANG-SQ1).